Consider the following 112-residue polypeptide: UPF0060 membrane protein Arth_4238 (112 aa).

The next 4 membrane-spanning stretches (helical) occupy residues 7-27 (ILLFVLAAAAEIGGAWLVWQA), 33-53 (EWWWAGLGVLALGVYGFAATL), 62-82 (ILAAYGGVFVAGSLAWGMVFD), and 88-108 (RWDIIGSVICLLGVAVIMFAP).

The protein belongs to the UPF0060 family.

It localises to the cell membrane. This chain is UPF0060 membrane protein Arth_4238, found in Arthrobacter sp. (strain FB24).